Reading from the N-terminus, the 160-residue chain is Crossover junction endodeoxyribonuclease RuvC (160 aa).

Residues Asp9, Glu68, and Asp141 contribute to the active site. The Mg(2+) site is built by Asp9, Glu68, and Asp141.

This sequence belongs to the RuvC family. Homodimer which binds Holliday junction (HJ) DNA. The HJ becomes 2-fold symmetrical on binding to RuvC with unstacked arms; it has a different conformation from HJ DNA in complex with RuvA. In the full resolvosome a probable DNA-RuvA(4)-RuvB(12)-RuvC(2) complex forms which resolves the HJ. It depends on Mg(2+) as a cofactor.

It is found in the cytoplasm. It carries out the reaction Endonucleolytic cleavage at a junction such as a reciprocal single-stranded crossover between two homologous DNA duplexes (Holliday junction).. In terms of biological role, the RuvA-RuvB-RuvC complex processes Holliday junction (HJ) DNA during genetic recombination and DNA repair. Endonuclease that resolves HJ intermediates. Cleaves cruciform DNA by making single-stranded nicks across the HJ at symmetrical positions within the homologous arms, yielding a 5'-phosphate and a 3'-hydroxyl group; requires a central core of homology in the junction. The consensus cleavage sequence is 5'-(A/T)TT(C/G)-3'. Cleavage occurs on the 3'-side of the TT dinucleotide at the point of strand exchange. HJ branch migration catalyzed by RuvA-RuvB allows RuvC to scan DNA until it finds its consensus sequence, where it cleaves and resolves the cruciform DNA. This chain is Crossover junction endodeoxyribonuclease RuvC, found in Campylobacter jejuni subsp. jejuni serotype O:23/36 (strain 81-176).